A 445-amino-acid chain; its full sequence is Hydroxycinnamoyl-CoA:5-hydroxyanthranilate N-hydroxycinnamoyltransferase HHT4 (445 aa).

The protein belongs to the plant acyltransferase family.

It carries out the reaction 5-hydroxyanthranilate + (E)-4-coumaroyl-CoA = avenanthramide A + CoA. The enzyme catalyses 5-hydroxyanthranilate + (E)-caffeoyl-CoA = avenanthramide C + CoA. Involved in the biosynthesis of avenanthramide phytoalexins, which are phenolic alkaloids found mainly in oats. Catalyzes the N-acylation of 5-hydroxyanthranilate with 4-coumaroyl-CoA or caffeoyl-CoA as acyl donors, forming avenanthramide A and avenanthramide C, respectively. Does not accept feruloyl-CoA as a substrate. This chain is Hydroxycinnamoyl-CoA:5-hydroxyanthranilate N-hydroxycinnamoyltransferase HHT4, found in Avena sativa (Oat).